The sequence spans 189 residues: Ras-like protein 1 (189 aa).

10 to 17 (GAGGVGKS) provides a ligand contact to GTP. Residues 32 to 40 (YDPTIEDSY) carry the Effector region motif. GTP-binding positions include 57-61 (DTAGQ) and 116-119 (NKCD). C186 bears the Cysteine methyl ester mark. Residue C186 is the site of S-geranylgeranyl cysteine attachment. Positions 187-189 (KML) are cleaved as a propeptide — removed in mature form.

Belongs to the small GTPase superfamily. Ras family.

Its subcellular location is the cell membrane. The enzyme catalyses GTP + H2O = GDP + phosphate + H(+). With respect to regulation, alternates between an inactive form bound to GDP and an active form bound to GTP. Activated by a guanine nucleotide-exchange factor (GEF) and inactivated by a GTPase-activating protein (GAP). In terms of biological role, ras proteins bind GDP/GTP and possess intrinsic GTPase activity. Plays a role in eye development by regulating cell growth, survival of postmitotic ommatidial cells and differentiation of photoreceptor cells. During larval development, mediates Ptth/tor signaling leading to the production of ecdysone, a hormone required for the initiation of metamorphosis. This chain is Ras-like protein 1, found in Drosophila ananassae (Fruit fly).